Consider the following 338-residue polypeptide: MAGSHPYFNLPDSTHPSPPSAPPSLRWCQRCQPSDATNGLLVALLGGGLPAGFVGPLSRMAYQASNLPSLELLICRCLFHLPIALPLKLRGDPLLGPPDIRGRACFCALLNVLSIGCAYSAVQVVPAGNAATVRKGSSTVCSAILTLCLESQGLSGYDWCGLLGSILGLIIIVGPGLWTLQEGTMGVYTALGYVQAFLGGLALSLGLLVYRSLHFPSCLPTVAFLFGLVGLLGFVPGLFVLQTPVLPSDLLSWSCVGAVGILALVSFTCVGYAVTKAHPALVCAVLHSEVVVALILQYYVLHETVAPFDITGAGIVLGSIAIITARNLSCERTGKVEE.

The segment at 1–21 (MAGSHPYFNLPDSTHPSPPSA) is disordered. 9 helical membrane-spanning segments follow: residues 37–57 (TNGL…VGPL), 67–87 (LPSL…ALPL), 105–125 (CFCA…VQVV), 160–180 (CGLL…LWTL), 190–210 (ALGY…LLVY), 221–241 (TVAF…LFVL), 250–270 (LLSW…FTCV), 281–301 (LVCA…YYVL), and 305–325 (VAPF…IITA). The 126-residue stretch at 49–174 (LPAGFVGPLS…SILGLIIIVG (126 aa)) folds into the EamA 1 domain. An EamA 2 domain is found at 272–325 (YAVTKAHPALVCAVLHSEVVVALILQYYVLHETVAPFDITGAGIVLGSIAIITA).

Belongs to the SLC35G solute transporter family.

The protein resides in the membrane. The sequence is that of Solute carrier family 35 member G5 (SLC35G5) from Pan paniscus (Pygmy chimpanzee).